Here is a 550-residue protein sequence, read N- to C-terminus: Aspartate--tRNA ligase (550 aa).

Glu-162 contacts L-aspartate. An aspartate region spans residues Gln-186–Lys-189. Arg-208 lines the L-aspartate pocket. ATP contacts are provided by residues Arg-208–Glu-210 and Gln-217. His-417 is an L-aspartate binding site. An ATP-binding site is contributed by Glu-451. An L-aspartate-binding site is contributed by Arg-458. Gly-499–Arg-502 is a binding site for ATP.

The protein belongs to the class-II aminoacyl-tRNA synthetase family. Type 1 subfamily. As to quaternary structure, homodimer.

It localises to the cytoplasm. It catalyses the reaction tRNA(Asp) + L-aspartate + ATP = L-aspartyl-tRNA(Asp) + AMP + diphosphate. Functionally, catalyzes the attachment of L-aspartate to tRNA(Asp) in a two-step reaction: L-aspartate is first activated by ATP to form Asp-AMP and then transferred to the acceptor end of tRNA(Asp). The sequence is that of Aspartate--tRNA ligase from Mycoplasma genitalium (strain ATCC 33530 / DSM 19775 / NCTC 10195 / G37) (Mycoplasmoides genitalium).